A 180-amino-acid polypeptide reads, in one-letter code: Putative adenylate kinase (180 aa).

Residues Gly10, Gly12, Lys13, Thr14, and Thr15 each contribute to the ATP site. An NMP region spans residues 30 to 50 (SVKELALSRGIGERVSDEIEI). The LID stretch occupies residues 99 to 109 (ARGYSKKKLAE). ATP-binding residues include Arg100 and Lys138.

It belongs to the adenylate kinase family. AK6 subfamily. Interacts with uS11. Not a structural component of 40S pre-ribosomes, but transiently interacts with them by binding to uS11.

It catalyses the reaction AMP + ATP = 2 ADP. The catalysed reaction is ATP + H2O = ADP + phosphate + H(+). Its function is as follows. Broad-specificity nucleoside monophosphate (NMP) kinase that catalyzes the reversible transfer of the terminal phosphate group between nucleoside triphosphates and monophosphates. Also has ATPase activity. Involved in the late maturation steps of the 30S ribosomal particles, specifically 16S rRNA maturation. While NMP activity is not required for ribosome maturation, ATPase activity is. Associates transiently with small ribosomal subunit protein uS11. ATP hydrolysis breaks the interaction with uS11. May temporarily remove uS11 from the ribosome to enable a conformational change of the ribosomal RNA that is needed for the final maturation step of the small ribosomal subunit. The polypeptide is Putative adenylate kinase (Thermococcus onnurineus (strain NA1)).